Consider the following 331-residue polypeptide: Geranylgeranyl transferase type-2 subunit beta (331 aa).

N-acetylglycine is present on glycine 2. At threonine 3 the chain carries Phosphothreonine. PFTB repeat units follow at residues 20–61, 68–109, 116–157, 164–205, 212–253, and 260–302; these read LEKH…DLMG, REEI…TLYD, INKV…ALLG, VEKA…AITS, SDLL…KIIG, and REKL…SLLG. 190–192 contacts geranylgeranyl diphosphate; it reads HAG. Residues aspartate 238 and cysteine 240 each coordinate Zn(2+). Position 241–244 (241–244) interacts with geranylgeranyl diphosphate; that stretch reads YSWW. Histidine 290 lines the Zn(2+) pocket.

Belongs to the protein prenyltransferase subunit beta family. In terms of assembly, heterotrimer composed of RABGGTA, RABGGTB and CHM; within this trimer, RABGGTA and RABGGTB form the catalytic component B, while CHM (component A) mediates peptide substrate binding. The Rab GGTase dimer (RGGT) interacts with CHM (component A) prior to Rab protein binding; the association is stabilized by geranylgeranyl pyrophosphate (GGpp). The CHM:RGGT:Rab complex is destabilized by GGpp. Interaction of RABGGTB with prenylated PTP4A2 precludes its association with RABGGTA and inhibits enzyme activity. Interacts with CHODL. Interacts with non-phosphorylated form of RAB8A; phosphorylation of RAB8A at 'Thr-72' disrupts this interaction. Requires Zn(2+) as cofactor.

It catalyses the reaction geranylgeranyl diphosphate + L-cysteinyl-[protein] = S-geranylgeranyl-L-cysteinyl-[protein] + diphosphate. With respect to regulation, the enzymatic reaction requires the aid of a Rab escort protein (also called component A). Catalyzes the transfer of a geranylgeranyl moiety from geranylgeranyl diphosphate to both cysteines of Rab proteins with the C-terminal sequence -XXCC, -XCXC and -CCXX, such as RAB1A, RAB3A, RAB5A and RAB7A. The protein is Geranylgeranyl transferase type-2 subunit beta (RABGGTB) of Bos taurus (Bovine).